The sequence spans 491 residues: Dipeptide and tripeptide permease B (491 aa).

Residues 1 to 26 (MNNTAPGLLHQPKPFFMIFFVELWER) are Cytoplasmic-facing. The helical transmembrane segment at 27–47 (FGYYGVQGILAVFFVKQLGFS) threads the bilayer. The Periplasmic portion of the chain corresponds to 48–51 (QEQA). Residues 52–72 (FITFGAFAALVYGLISIGGYV) traverse the membrane as a helical segment. Residues 73 to 81 (GDHLLGTKR) lie on the Cytoplasmic side of the membrane. The chain crosses the membrane as a helical span at residues 82 to 102 (TMVLGAIVLALGYFMTGMSLL). Residues 103 to 105 (KPE) are Periplasmic-facing. Residues 106–126 (MIFIALGTIAVGNGLFKANPA) traverse the membrane as a helical segment. At 127-145 (SLLSKCYPPKDPRLDGAFT) the chain is on the cytoplasmic side. Residues 146–166 (LFYMSINIGSLLSLSLAPIIA) form a helical membrane-spanning segment. Topologically, residues 167–171 (ERFGY) are periplasmic. The helical transmembrane segment at 172–192 (AVTYNLCGLGLIIALLVYFAC) threads the bilayer. Over 193–210 (RGMVRSIGSAPDHQPLNY) the chain is Cytoplasmic. Residues 211–231 (GKLLLVLAGAVVMIFLCAWLM) traverse the membrane as a helical segment. Position 232 (His-232) is a topological domain, periplasmic. The helical transmembrane segment at 233–253 (NVGVANIVLIAVSAVVLYFFF) threads the bilayer. Topologically, residues 254–266 (REAFKQDKTGRNR) are cytoplasmic. A helical membrane pass occupies residues 267 to 287 (MFVAFILMIEAVLFYILYAQM). At 288–312 (PTSLNFFAINNVRHELLGFAINPVS) the chain is on the periplasmic side. Residues 313–335 (FQALNPFWVVVASPILASIYTRL) form a helical membrane-spanning segment. Topologically, residues 336-349 (GSRGRDMTMPTKFT) are cytoplasmic. The helical transmembrane segment at 350 to 370 (LGMLLCSLGFLTAAAAGMWFA) threads the bilayer. At 371-378 (DAQGLTSP) the chain is on the periplasmic side. The helical transmembrane segment at 379-399 (WFVVLVYLFQSLGELMISALG) threads the bilayer. The Cytoplasmic portion of the chain corresponds to 400–423 (LAMVAALVPQYLMGFILGMWFLTQ). The chain crosses the membrane as a helical span at residues 424-444 (AAAFLLGGYVATFTAVPAGIH). Over 445–454 (DPLQTLPIYT) the chain is Periplasmic. Residues 455-475 (GVFGKIGIATLIVTLVMAAMV) traverse the membrane as a helical segment. Over 476–491 (PWLNRMMNTPADGQKA) the chain is Cytoplasmic.

Belongs to the major facilitator superfamily. Proton-dependent oligopeptide transporter (POT/PTR) (TC 2.A.17) family. DtpB subfamily.

It localises to the cell inner membrane. Its function is as follows. Proton-dependent permease that transports di- and tripeptides. This Edwardsiella piscicida protein is Dipeptide and tripeptide permease B.